The primary structure comprises 156 residues: Small ribosomal subunit protein uS7 (156 aa).

This sequence belongs to the universal ribosomal protein uS7 family. In terms of assembly, part of the 30S ribosomal subunit. Contacts proteins S9 and S11.

Functionally, one of the primary rRNA binding proteins, it binds directly to 16S rRNA where it nucleates assembly of the head domain of the 30S subunit. Is located at the subunit interface close to the decoding center, probably blocks exit of the E-site tRNA. The chain is Small ribosomal subunit protein uS7 from Marinobacter nauticus (strain ATCC 700491 / DSM 11845 / VT8) (Marinobacter aquaeolei).